Consider the following 479-residue polypeptide: Sulfate adenylyltransferase subunit 1 (479 aa).

Residues 25–239 (KSLLRFLTCG…EVLETVDIQR (215 aa)) form the tr-type G domain. A G1 region spans residues 34-41 (GSVDDGKS). A GTP-binding site is contributed by 34-41 (GSVDDGKS). Residues 92 to 96 (GITID) form a G2 region. The segment at 113 to 116 (DTPG) is G3. GTP is bound by residues 113–117 (DTPGH) and 168–171 (NKMD). Positions 168 to 171 (NKMD) are G4. Residues 206-208 (SAL) form a G5 region.

The protein belongs to the TRAFAC class translation factor GTPase superfamily. Classic translation factor GTPase family. CysN/NodQ subfamily. As to quaternary structure, heterodimer composed of CysD, the smaller subunit, and CysN.

The enzyme catalyses sulfate + ATP + H(+) = adenosine 5'-phosphosulfate + diphosphate. Its pathway is sulfur metabolism; hydrogen sulfide biosynthesis; sulfite from sulfate: step 1/3. Its function is as follows. With CysD forms the ATP sulfurylase (ATPS) that catalyzes the adenylation of sulfate producing adenosine 5'-phosphosulfate (APS) and diphosphate, the first enzymatic step in sulfur assimilation pathway. APS synthesis involves the formation of a high-energy phosphoric-sulfuric acid anhydride bond driven by GTP hydrolysis by CysN coupled to ATP hydrolysis by CysD. The protein is Sulfate adenylyltransferase subunit 1 of Salmonella paratyphi A (strain ATCC 9150 / SARB42).